The following is a 209-amino-acid chain: Guanylate kinase (209 aa).

Residues G5–V182 form the Guanylate kinase-like domain. Residue G12–G19 participates in ATP binding.

It belongs to the guanylate kinase family.

Its subcellular location is the cytoplasm. The enzyme catalyses GMP + ATP = GDP + ADP. Essential for recycling GMP and indirectly, cGMP. This is Guanylate kinase from Clostridium acetobutylicum (strain ATCC 824 / DSM 792 / JCM 1419 / IAM 19013 / LMG 5710 / NBRC 13948 / NRRL B-527 / VKM B-1787 / 2291 / W).